Reading from the N-terminus, the 442-residue chain is Trigger factor (442 aa).

The 86-residue stretch at 163–248 (GDQVVIDFLG…IKEVKAPKAA (86 aa)) folds into the PPIase FKBP-type domain.

It belongs to the FKBP-type PPIase family. Tig subfamily.

It is found in the cytoplasm. The enzyme catalyses [protein]-peptidylproline (omega=180) = [protein]-peptidylproline (omega=0). Its function is as follows. Involved in protein export. Acts as a chaperone by maintaining the newly synthesized protein in an open conformation. Functions as a peptidyl-prolyl cis-trans isomerase. This Dinoroseobacter shibae (strain DSM 16493 / NCIMB 14021 / DFL 12) protein is Trigger factor.